We begin with the raw amino-acid sequence, 367 residues long: D-alanine--D-alanine ligase (367 aa).

Positions 139–340 constitute an ATP-grasp domain; it reads KLILKEKNIP…FSQVIDNMIS (202 aa). Position 169 to 224 (169 to 224) interacts with ATP; it reads KEVLEYPMIVKPARLGSSIGVKKVNDKCELEEAIETAFSFDDKVIVEKWIDSRELN. Residues Asp-298, Glu-311, and Asn-313 each coordinate Mg(2+).

The protein belongs to the D-alanine--D-alanine ligase family. It depends on Mg(2+) as a cofactor. Mn(2+) is required as a cofactor.

It is found in the cytoplasm. The catalysed reaction is 2 D-alanine + ATP = D-alanyl-D-alanine + ADP + phosphate + H(+). It participates in cell wall biogenesis; peptidoglycan biosynthesis. In terms of biological role, cell wall formation. The protein is D-alanine--D-alanine ligase of Thermosipho africanus (strain TCF52B).